Reading from the N-terminus, the 217-residue chain is Somatotropin (217 aa).

The first 26 residues, 1-26, serve as a signal peptide directing secretion; the sequence is MAPGSRTSLLLAFGLLCLPWLQEGSA. His-44 provides a ligand contact to Zn(2+). Residues Cys-79 and Cys-191 are joined by a disulfide bond. Ser-132 is subject to Phosphoserine. Glu-200 serves as a coordination point for Zn(2+). An intrachain disulfide couples Cys-208 to Cys-215.

The protein belongs to the somatotropin/prolactin family.

The protein localises to the secreted. Plays an important role in growth control. Its major role in stimulating body growth is to stimulate the liver and other tissues to secrete IGF1. It stimulates both the differentiation and proliferation of myoblasts. It also stimulates amino acid uptake and protein synthesis in muscle and other tissues. This is Somatotropin (GH1) from Pan troglodytes (Chimpanzee).